The sequence spans 566 residues: Proline--tRNA ligase (566 aa).

This sequence belongs to the class-II aminoacyl-tRNA synthetase family. ProS type 1 subfamily. Homodimer.

It is found in the cytoplasm. It catalyses the reaction tRNA(Pro) + L-proline + ATP = L-prolyl-tRNA(Pro) + AMP + diphosphate. Functionally, catalyzes the attachment of proline to tRNA(Pro) in a two-step reaction: proline is first activated by ATP to form Pro-AMP and then transferred to the acceptor end of tRNA(Pro). As ProRS can inadvertently accommodate and process non-cognate amino acids such as alanine and cysteine, to avoid such errors it has two additional distinct editing activities against alanine. One activity is designated as 'pretransfer' editing and involves the tRNA(Pro)-independent hydrolysis of activated Ala-AMP. The other activity is designated 'posttransfer' editing and involves deacylation of mischarged Ala-tRNA(Pro). The misacylated Cys-tRNA(Pro) is not edited by ProRS. The chain is Proline--tRNA ligase from Bacillus anthracis (strain A0248).